The sequence spans 378 residues: Erythronate-4-phosphate dehydrogenase (378 aa).

The substrate site is built by Ser45 and Thr66. Positions 146 and 175 each coordinate NAD(+). Residue Arg208 is part of the active site. Asp232 contributes to the NAD(+) binding site. Glu237 is an active-site residue. The active-site Proton donor is His254. Gly257 serves as a coordination point for NAD(+). Tyr258 lines the substrate pocket.

The protein belongs to the D-isomer specific 2-hydroxyacid dehydrogenase family. PdxB subfamily. Homodimer.

Its subcellular location is the cytoplasm. The catalysed reaction is 4-phospho-D-erythronate + NAD(+) = (R)-3-hydroxy-2-oxo-4-phosphooxybutanoate + NADH + H(+). The protein operates within cofactor biosynthesis; pyridoxine 5'-phosphate biosynthesis; pyridoxine 5'-phosphate from D-erythrose 4-phosphate: step 2/5. Functionally, catalyzes the oxidation of erythronate-4-phosphate to 3-hydroxy-2-oxo-4-phosphonooxybutanoate. This is Erythronate-4-phosphate dehydrogenase from Escherichia coli O157:H7.